The sequence spans 1000 residues: Putative methyl-accepting chemotaxis protein sll0041 (1000 aa).

A disordered region spans residues 1 to 59; it reads MTQNPSSDRRPDTAQSVANGETLDGALFTGLTDTAAAQDESSETSASFATIDGEDKSEV. GAF domains lie at 342–478 and 509–650; these read EIQG…QTTL and NSEQ…GLAL. An HAMP domain is found at 671–722; sequence EKMQKRALELLMEVDPVSRGDLTIRAHVTEDEIGTIADSYNATIESLRRIVT. Residues 727 to 963 form the Methyl-accepting transducer domain; it reads AASQFTETTD…SVTQTMALVA (237 aa).

It belongs to the methyl-accepting chemotaxis (MCP) protein family.

This chain is Putative methyl-accepting chemotaxis protein sll0041, found in Synechocystis sp. (strain ATCC 27184 / PCC 6803 / Kazusa).